The primary structure comprises 163 residues: Large ribosomal subunit protein uL10 (163 aa).

Belongs to the universal ribosomal protein uL10 family. As to quaternary structure, part of the ribosomal stalk of the 50S ribosomal subunit. The N-terminus interacts with L11 and the large rRNA to form the base of the stalk. The C-terminus forms an elongated spine to which L12 dimers bind in a sequential fashion forming a multimeric L10(L12)X complex.

Functionally, forms part of the ribosomal stalk, playing a central role in the interaction of the ribosome with GTP-bound translation factors. In Haemophilus influenzae (strain PittEE), this protein is Large ribosomal subunit protein uL10.